Reading from the N-terminus, the 376-residue chain is Succinyl-diaminopimelate desuccinylase (376 aa).

Histidine 66 contacts Zn(2+). Aspartate 68 is an active-site residue. Aspartate 99 contacts Zn(2+). Glutamate 133 acts as the Proton acceptor in catalysis. Zn(2+)-binding residues include glutamate 134, glutamate 162, and histidine 349.

It belongs to the peptidase M20A family. DapE subfamily. Homodimer. It depends on Zn(2+) as a cofactor. The cofactor is Co(2+).

The enzyme catalyses N-succinyl-(2S,6S)-2,6-diaminopimelate + H2O = (2S,6S)-2,6-diaminopimelate + succinate. Its pathway is amino-acid biosynthesis; L-lysine biosynthesis via DAP pathway; LL-2,6-diaminopimelate from (S)-tetrahydrodipicolinate (succinylase route): step 3/3. In terms of biological role, catalyzes the hydrolysis of N-succinyl-L,L-diaminopimelic acid (SDAP), forming succinate and LL-2,6-diaminopimelate (DAP), an intermediate involved in the bacterial biosynthesis of lysine and meso-diaminopimelic acid, an essential component of bacterial cell walls. The sequence is that of Succinyl-diaminopimelate desuccinylase from Buchnera aphidicola subsp. Cinara cedri (strain Cc).